A 370-amino-acid chain; its full sequence is Calcium/calmodulin-dependent protein kinase type 1 (370 aa).

The 257-residue stretch at 20–276 (YDFRDVLGTG…CEQALQHPWI (257 aa)) folds into the Protein kinase domain. Residues 26 to 34 (LGTGAFSEV) and Lys49 contribute to the ATP site. A Glycyl lysine isopeptide (Lys-Gly) (interchain with G-Cter in ubiquitin) cross-link involves residue Lys59. Asp141 (proton acceptor) is an active-site residue. Thr177 carries the post-translational modification Phosphothreonine; by CaMKK1 and CaMKK2. Residues 276–316 (IAGDTALDKNIHQSVSEQIKKNFAKSKWKQAFNATAVVRHM) are autoinhibitory domain. The tract at residues 296–317 (KNFAKSKWKQAFNATAVVRHMR) is calmodulin-binding. Residues 315–321 (HMRKLQL) carry the Nuclear export signal motif. Ser363 carries the phosphoserine modification.

The protein belongs to the protein kinase superfamily. CAMK Ser/Thr protein kinase family. CaMK subfamily. As to quaternary structure, monomer. Interacts with XPO1. Interacts with MARK2, ARHGEF7/BETAPIX and GIT1. In terms of processing, phosphorylated by CaMKK1 and CaMKK2 on Thr-177. Polybiquitinated by the E3 ubiquitin-protein ligase complex SCF(FBXL12), leading to proteasomal degradation. As to expression, widely expressed. Expressed in cells of the zona glomerulosa of the adrenal cortex.

The protein localises to the cytoplasm. It is found in the nucleus. The enzyme catalyses L-seryl-[protein] + ATP = O-phospho-L-seryl-[protein] + ADP + H(+). It catalyses the reaction L-threonyl-[protein] + ATP = O-phospho-L-threonyl-[protein] + ADP + H(+). Its activity is regulated as follows. Activated by Ca(2+)/calmodulin. Binding of calmodulin results in conformational change that relieves intrasteric autoinhibition and allows phosphorylation of Thr-177 within the activation loop by CaMKK1 or CaMKK2. Phosphorylation of Thr-177 results in several fold increase in total activity. Unlike CaMK4, is unable to exhibit autonomous activity after Ca(2+)/calmodulin activation. Functionally, calcium/calmodulin-dependent protein kinase that operates in the calcium-triggered CaMKK-CaMK1 signaling cascade and, upon calcium influx, regulates transcription activators activity, cell cycle, hormone production, cell differentiation, actin filament organization and neurite outgrowth. Recognizes the substrate consensus sequence [MVLIF]-x-R-x(2)-[ST]-x(3)-[MVLIF]. Regulates axonal extension and growth cone motility in hippocampal and cerebellar nerve cells. Upon NMDA receptor-mediated Ca(2+) elevation, promotes dendritic growth in hippocampal neurons and is essential in synapses for full long-term potentiation (LTP) and ERK2-dependent translational activation. Downstream of NMDA receptors, promotes the formation of spines and synapses in hippocampal neurons by phosphorylating ARHGEF7/BETAPIX on 'Ser-694', which results in the enhancement of ARHGEF7 activity and activation of RAC1. Promotes neuronal differentiation and neurite outgrowth by activation and phosphorylation of MARK2 on 'Ser-91', 'Ser-92', 'Ser-93' and 'Ser-294'. Promotes nuclear export of HDAC5 and binding to 14-3-3 by phosphorylation of 'Ser-259' and 'Ser-498' in the regulation of muscle cell differentiation. Regulates NUMB-mediated endocytosis by phosphorylation of NUMB on 'Ser-276' and 'Ser-295'. Involved in the regulation of basal and estrogen-stimulated migration of medulloblastoma cells through ARHGEF7/BETAPIX phosphorylation. Is required for proper activation of cyclin-D1/CDK4 complex during G1 progression in diploid fibroblasts. Plays a role in K(+) and ANG2-mediated regulation of the aldosterone synthase (CYP11B2) to produce aldosterone in the adrenal cortex. Phosphorylates EIF4G3/eIF4GII. In vitro phosphorylates CREB1, ATF1, CFTR, MYL9 and SYN1/synapsin I. In Homo sapiens (Human), this protein is Calcium/calmodulin-dependent protein kinase type 1 (CAMK1).